Consider the following 441-residue polypeptide: Tol-Pal system protein TolB (441 aa).

Positions 1–39 (MPAMTPAFRRADLTGFLRTYGAALILLLAAMLAWQPAQA) are cleaved as a signal peptide.

This sequence belongs to the TolB family. As to quaternary structure, the Tol-Pal system is composed of five core proteins: the inner membrane proteins TolA, TolQ and TolR, the periplasmic protein TolB and the outer membrane protein Pal. They form a network linking the inner and outer membranes and the peptidoglycan layer.

It is found in the periplasm. In terms of biological role, part of the Tol-Pal system, which plays a role in outer membrane invagination during cell division and is important for maintaining outer membrane integrity. This chain is Tol-Pal system protein TolB, found in Bordetella parapertussis (strain 12822 / ATCC BAA-587 / NCTC 13253).